The chain runs to 327 residues: GTPase Obg (327 aa).

The Obg domain maps to 1-159 (MQFIDQANII…WEVQLELKLL (159 aa)). Residues 160-327 (AEVGIIGLPN…SLLSEVWNRI (168 aa)) form the OBG-type G domain. ATP contacts are provided by residues 166–173 (GLPNAGKS), 191–195 (FTTLI), 213–216 (DIPG), 280–283 (NKKE), and 309–311 (SSA). Positions 173 and 193 each coordinate Mg(2+).

This sequence belongs to the TRAFAC class OBG-HflX-like GTPase superfamily. OBG GTPase family. Monomer. Mg(2+) serves as cofactor.

The protein resides in the cytoplasm. Its function is as follows. An essential GTPase which binds GTP, GDP and possibly (p)ppGpp with moderate affinity, with high nucleotide exchange rates and a fairly low GTP hydrolysis rate. Plays a role in control of the cell cycle, stress response, ribosome biogenesis and in those bacteria that undergo differentiation, in morphogenesis control. This chain is GTPase Obg, found in Prochlorococcus marinus (strain MIT 9515).